The following is a 261-amino-acid chain: Src-like-adapter 2 (261 aa).

The segment covering 1–10 (MGSLPSRRKS) has biased composition (basic residues). The interval 1 to 31 (MGSLPSRRKSLPSPSLSSSVQGQGPVTMEAE) is disordered. Gly-2 is lipidated: N-myristoyl glycine. In terms of domain architecture, SH3 spans 32-92 (RSKATAVALG…PSVHVAKVSH (61 aa)). The SH2 domain occupies 94–191 (WLYEGLSREK…DICCLLKEPC (98 aa)). The SLA C-terminal stretch occupies residues 195–261 (RAGPLPGKDI…NDEAVSLDDA (67 aa)).

Interacts (via SH2 domain) with ZAP70 (phosphorylated) and CD3Z (phosphorylated). Interacts (via SH2 domain) with CSF1R (phosphorylated). Interacts (via its C-terminal domain) with CBL (phosphorylated). In terms of processing, phosphorylated by CSF1R. In terms of tissue distribution, predominantly expressed in immune system, with highest levels in peripheral blood leukocytes. Expressed in spleen, thymus and lymph nodes. Expressed in T-cells as well as in monocytes, and at low level in B-cells. Also detected in placenta, prostate, skin, retina and colon.

It localises to the cytoplasm. Its subcellular location is the cell membrane. It is found in the cytoplasmic vesicle. In terms of biological role, adapter protein, which negatively regulates T-cell receptor (TCR) signaling. Inhibits T-cell antigen-receptor induced activation of nuclear factor of activated T-cells. May act by linking signaling proteins such as ZAP70 with CBL, leading to a CBL dependent degradation of signaling proteins. This Homo sapiens (Human) protein is Src-like-adapter 2 (SLA2).